Consider the following 2467-residue polypeptide: Polyprotein P1234 (2467 aa).

One can recognise an Alphavirus-like MT domain in the interval 27–258 (ESQQVTPNDH…ESRKLLRSWH (232 aa)). Residues 243–262 (GSTLYTESRKLLRSWHLPSV) form a nsP1 membrane-binding region. S-palmitoyl cysteine; by host attachment occurs at residues Cys-416 and Cys-418. Residues 689–841 (DLINPPFHEF…HNICTRVLHK (153 aa)) enclose the (+)RNA virus helicase ATP-binding domain. 720 to 727 (GVPGSGKS) serves as a coordination point for a ribonucleoside 5'-triphosphate. A (+)RNA virus helicase C-terminal domain is found at 842 to 990 (SISRRCTLPV…LEEWHEEHDG (149 aa)). Positions 1003–1325 (DPFQNKAKVC…QKLSSMYACN (323 aa)) constitute a Peptidase C9 domain. A nucleolus localization signal region spans residues 1004–1023 (PFQNKAKVCWAKCLVQVLET). Cys-1012 acts as the For cysteine protease nsP2 activity in catalysis. The Nuclear export signal motif lies at 1056 to 1065 (TRYYGVDLDS). His-1081 serves as the catalytic For cysteine protease nsP2 activity. A Nuclear localization signal motif is present at residues 1180 to 1184 (PHKRV). Residues 1333 to 1492 (APSYRVRRAD…KIQEAIDRRT (160 aa)) form the Macro domain. ADP-D-ribose is bound by residues Asp-1342, Asn-1356, Gly-1364, Gly-1444, and Phe-1446. Residues Cys-1594, Cys-1596, Cys-1619, and Cys-1637 each coordinate Zn(2+). Residues 1768–1803 (KVATEPPLEPEAPIPAPRKRRTTSTSPPHNPEDFVP) are disordered. Residues 1774–1783 (PLEPEAPIPA) are compositionally biased toward pro residues. 2 short sequence motifs (FGDF; binding to host G3BP1) span residues 1820–1823 (FGDL) and 1841–1844 (FGDI). Residues 2221–2336 (DAVLETDIAS…HGVRSDPLMA (116 aa)) form the RdRp catalytic domain.

As to quaternary structure, interacts with non-structural protein 3. Interacts with RNA-directed RNA polymerase nsP4. Interacts with protease nsP2. interacts with itself. In terms of assembly, interacts with mRNA-capping enzyme nsP1. Interacts with host DDX1. Interacts with host DDX3. Interacts (via C-terminus) with host G3BP1; this interaction inhibits the formation of host stress granules on viral mRNAs and the nsp3-G3BP1 complexes bind viral RNAs and probably orchestrate the assembly of viral replication complexes. Interacts (via C-terminus) with host G3BP2; this interaction inhibits the formation of host stress granules on viral mRNAs and the nsp3-G3BP2 complexes bind viral RNAs and probably orchestrate the assembly of viral replication complexes. Interacts with mRNA-capping enzyme nsP1. Interacts with protease nsP2. interacts with itself. As to quaternary structure, interacts with RNA-directed RNA polymerase nsP4. Interacts with mRNA-capping enzyme nsP1. Interacts with KPNA1/karyopherin-alpha1; this interaction probably allows the active transport of protease nsP2 into the host nucleus. Requires Mg(2+) as cofactor. It depends on Mn(2+) as a cofactor. Post-translationally, specific enzymatic cleavages in vivo yield mature proteins. The processing of the polyprotein is temporally regulated. In early stages (1.7 hpi), P1234 is first cleaved in trans through its nsP2 protease activity, releasing P123' and nsP4, which associate to form the early replication complex. At the same time, P1234 is also cut at the nsP1/nsP2 site early in infection but with lower efficiency. After replication of the viral minus-strand RNAs (4 hpi), the polyproteins are cut at the nsP1/nsP2 and nsP2/nsP3 sites very efficiently, preventing accumulation of P123' and P1234 and allowing the formation of the late replication complex. NsP3'/nsP4 site is not cleaved anymore and P34 is produced rather than nsP4. In terms of processing, specific enzymatic cleavages in vivo yield mature proteins. The processing of the polyprotein is temporally regulated. In early stages (1.7 hpi), P123 is cleaved at the nsP1/nsP2 site with low efficiency. After replication of the viral minus-strand RNAs (4 hpi), the polyproteins are cut at the nsP1/nsP2 and nsP2/nsP3 sites very efficiently, preventing accumulation of P123 and allowing the formation of the late replication complex. Palmitoylated by host palmitoyltransferases ZDHHC2 and ZDHHC19. Post-translationally, phosphorylated by host on serines and threonines. In terms of processing, ubiquitinated; targets the protein for rapid degradation via the ubiquitin system. Nsp4 is present in extremely low quantities due to low frequency of translation through the amber stop-codon and the degradation by the ubiquitin pathway.

It localises to the host cytoplasmic vesicle membrane. The protein resides in the host cell membrane. It is found in the host cell projection. Its subcellular location is the host filopodium. The protein localises to the host nucleus. It localises to the host cytoplasm. The catalysed reaction is GTP + S-adenosyl-L-methionine = N(7)-methyl-GTP + S-adenosyl-L-homocysteine. It catalyses the reaction N(7)-methyl-GTP + L-histidyl-[protein] = N(tele)-(N(7)-methylguanosine 5'-phospho)-L-histidyl-[protein] + diphosphate. The enzyme catalyses N(tele)-(N(7)-methylguanosine 5'-phospho)-L-histidyl-[protein] + a 5'-end diphospho-(purine-ribonucleoside) in mRNA + H(+) = a 5'-end (N(7)-methyl 5'-triphosphoguanosine)-(purine-ribonucleoside) in mRNA + L-histidyl-[protein]. It carries out the reaction a 5'-end triphospho-ribonucleoside in mRNA + H2O = a 5'-end diphospho-ribonucleoside in mRNA + phosphate + H(+). The catalysed reaction is a ribonucleoside 5'-triphosphate + H2O = a ribonucleoside 5'-diphosphate + phosphate + H(+). It catalyses the reaction ATP + H2O = ADP + phosphate + H(+). The enzyme catalyses RNA(n) + a ribonucleoside 5'-triphosphate = RNA(n+1) + diphosphate. It carries out the reaction RNA(n) + ATP = RNA(n)-3'-adenine ribonucleotide + diphosphate. The catalysed reaction is 4-O-(ADP-D-ribosyl)-L-aspartyl-[protein] + H2O = L-aspartyl-[protein] + ADP-D-ribose + H(+). It catalyses the reaction 5-O-(ADP-D-ribosyl)-L-glutamyl-[protein] + H2O = L-glutamyl-[protein] + ADP-D-ribose + H(+). The enzyme catalyses ADP-alpha-D-ribose 1''-phosphate + H2O = ADP-D-ribose + phosphate. Functionally, inactive precursor of the viral replicase, which is activated by cleavages carried out by the viral protease nsP2. The early replication complex formed by the polyprotein P123 and nsP4 synthesizes minus-strand RNAs. As soon P123 is cleaved into mature proteins, the plus-strand RNAs synthesis begins. Its function is as follows. The early replication complex formed by the polyprotein P123' and nsP4 synthesizes minus-strand RNAs. Polyprotein P123' is a short-lived polyprotein that accumulates during early stage of infection. As soon P123' is cleaved into mature proteins, the plus-strand RNAs synthesis begins. In terms of biological role, cytoplasmic capping enzyme that catalyzes two virus-specific reactions: methyltransferase and nsP1 guanylyltransferase. mRNA-capping is necessary since all viral RNAs are synthesized in the cytoplasm, and host capping enzymes are restricted to the nucleus. The enzymatic reaction involves a covalent link between 7-methyl-GMP and nsP1, whereas eukaryotic capping enzymes form a covalent complex only with GMP. nsP1 capping consists in the following reactions: GTP is first methylated into 7-methyl-GMP and then is covalently linked to nsP1 to form the m7GMp-nsP1 complex from which 7-methyl-GMP complex is transferred to the mRNA to create the cap structure. NsP1 is needed for the initiation of the minus-strand RNAs synthesis. Probably serves as a membrane anchor for the replication complex composed of nsP1-nsP4. Palmitoylated nsP1 is remodeling host cell cytoskeleton, and induces filopodium-like structure formation at the surface of the host cell. Functionally, multifunctional protein whose N-terminus is part of the RNA polymerase complex and displays NTPase, RNA triphosphatase and helicase activities. NTPase and RNA triphosphatase are involved in viral RNA capping and helicase keeps a check on the dsRNA replication intermediates. The C-terminus harbors a protease that specifically cleaves the polyproteins and releases the mature proteins. Required for the shutoff of minus-strand RNAs synthesis. Specifically inhibits the host IFN response by promoting the nuclear export of host STAT1. Also inhibits host transcription by inducing rapid proteasome-dependent degradation of POLR2A, a catalytic subunit of the RNAPII complex. The resulting inhibition of cellular protein synthesis serves to ensure maximal viral gene expression and to evade host immune response. Seems to be essential for minus-strand RNAs and subgenomic 26S mRNAs synthesis. Displays mono-ADP-ribosylhydrolase activity. ADP-ribosylation is a post-translational modification that controls various processes of the host cell and the virus probably needs to revert it for optimal viral replication. Binds proteins of FXR family and sequesters them into the viral RNA replication complexes thereby inhibiting the formation of host stress granules on viral mRNAs. The nsp3'-FXR complexes bind viral RNAs and probably orchestrate the assembly of viral replication complexes, thanks to the ability of FXR family members to self-assemble and bind DNA. Its function is as follows. Seems to be essential for minus-strand RNAs and subgenomic 26S mRNAs synthesis. Displays mono-ADP-ribosylhydrolase activity. ADP-ribosylation is a post-translantional modification that controls various processes of the host cell and the virus probably needs to revert it for optimal viral replication. Binds proteins of G3BP family and sequesters them into the viral RNA replication complexes thereby inhibiting the formation of host stress granules on viral mRNAs. The nsp3-G3BP complexes bind viral RNAs and probably orchestrate the assembly of viral replication complexes, thanks to the ability of G3BP family members to self-assemble and bind DNA. In terms of biological role, RNA dependent RNA polymerase. Replicates genomic and antigenomic RNA by recognizing replications specific signals. The early replication complex formed by the polyprotein P123 and nsP4 synthesizes minus-strand RNAs. The late replication complex composed of fully processed nsP1-nsP4 is responsible for the production of genomic and subgenomic plus-strand RNAs. The core catalytic domain of nsP4 also possesses terminal adenylyltransferase (TATase) activity that is probably involved in maintenance and repair of the poly(A) tail, an element required for replication of the viral genome. This Getah virus (GETV) protein is Polyprotein P1234.